A 189-amino-acid polypeptide reads, in one-letter code: Xanthine phosphoribosyltransferase (189 aa).

Xanthine is bound by residues L20 and N27. 128-132 (ANGKA) serves as a coordination point for 5-phospho-alpha-D-ribose 1-diphosphate. K156 serves as a coordination point for xanthine.

Belongs to the purine/pyrimidine phosphoribosyltransferase family. Xpt subfamily. In terms of assembly, homodimer.

Its subcellular location is the cytoplasm. It catalyses the reaction XMP + diphosphate = xanthine + 5-phospho-alpha-D-ribose 1-diphosphate. The protein operates within purine metabolism; XMP biosynthesis via salvage pathway; XMP from xanthine: step 1/1. Converts the preformed base xanthine, a product of nucleic acid breakdown, to xanthosine 5'-monophosphate (XMP), so it can be reused for RNA or DNA synthesis. The chain is Xanthine phosphoribosyltransferase from Pseudomonas syringae pv. syringae (strain B728a).